Reading from the N-terminus, the 764-residue chain is Nucleolar transcription factor 1 (764 aa).

Met1 carries the post-translational modification N-acetylmethionine. The segment at 1 to 21 (MNGEADCPTDLEMAAPKGQDR) is disordered. 2 DNA-binding regions (HMG box) span residues 112 to 180 (PKKP…ARFR) and 196 to 264 (PEKP…RDYI). At Thr201 the chain carries Phosphothreonine. A phosphoserine mark is found at Ser273, Ser336, and Ser364. Residues 298–362 (TKPPPNSYSL…DYEVELLRFL (65 aa)) constitute a DNA-binding region (HMG box 3). The segment covering 370–379 (QQRVLGEEKM) has biased composition (basic and acidic residues). The segment at 370-411 (QQRVLGEEKMLNINKKQTTSPASKKPSQEGGKGGSEKPKRPV) is disordered. Phosphoserine occurs at positions 389, 412, 433, 435, 484, 495, 546, 584, and 638. 3 consecutive DNA-binding regions (HMG box) follow at residues 407-475 (PKRP…GGER), 482-549 (PESP…SEMR), and 568-634 (KKPP…DLWV). The interval 456 to 488 (YKAREAALKAQSERKPGGEREDRGKLPESPKRA) is disordered. Basic and acidic residues predominate over residues 457–488 (KAREAALKAQSERKPGGEREDRGKLPESPKRA). A disordered region spans residues 546-576 (SEMRAPPAATNSSKKMKFQGEPKKPPMNGYQ). A disordered region spans residues 648–764 (YISNKRKNMT…SGDSSDSDSN (117 aa)). The segment covering 664–674 (PKSSRTTLQSK) has biased composition (polar residues). Over residues 677–745 (SEEDDDEEDD…DDDEDEDNES (69 aa)) the composition is skewed to acidic residues. Over residues 746–758 (EGSSSSSSSSGDS) the composition is skewed to low complexity.

In terms of assembly, homodimer. Part of Pol I pre-initiation complex (PIC), in which Pol I core assembles with RRN3 and promoter-bound UTBF and SL1/TIF-IB complex. Interacts with TOP2A in the context of Pol I complex. Interacts with TBP. Interacts with TAF1A. Interacts with PHF6. Interacts with CEBPA (isoform 1 and isoform 4). Interacts with DDX11. Interacts with NOP53. Interacts with RASL11A. Interacts with DHX33. Binds to IRS1 and PIK3CA. Interacts with ALKBH2. Phosphorylated and activated by PIK3CA.

The protein resides in the nucleus. It is found in the nucleolus. Its function is as follows. Recognizes the ribosomal RNA gene promoter and activates transcription mediated by RNA polymerase I through cooperative interactions with the transcription factor SL1/TIF-IB complex. It binds specifically to the upstream control element. This chain is Nucleolar transcription factor 1 (Ubtf), found in Rattus norvegicus (Rat).